The following is a 309-amino-acid chain: MTKKEIIILCGPTASGKSYLGHEFAKAYNGEIVNIDSMQVYKEISIITASPPKSYTAEVTYHLYNFLSITEDFSVVKYLKLATEKIKEITARGKLPILIGGTGLYINSLVFGYNNIPDISEDLREQVRNLHTEIGNIGLWNKLEELDTLAASKINQNDTQRLIRAYEVFLQTGKSIFSFQTLPKEQILSDFNFKIIFLNPERKFLYKTCDERLDKIFKEGAIDEIALIKKQFIPQDYSNLKAVGVKEILAYLDGNLTLDEALSAAQIRTRHYAKRQVTWFKKQIEDKTTLEYSNQEEFAQILNVIPAWH.

11–18 contributes to the ATP binding site; it reads GPTASGKS. Position 13 to 18 (13 to 18) interacts with substrate; it reads TASGKS. Interaction with substrate tRNA stretches follow at residues 36-39 and 160-164; these read DSMQ and QRLIR.

It belongs to the IPP transferase family. In terms of assembly, monomer. The cofactor is Mg(2+).

The catalysed reaction is adenosine(37) in tRNA + dimethylallyl diphosphate = N(6)-dimethylallyladenosine(37) in tRNA + diphosphate. Its function is as follows. Catalyzes the transfer of a dimethylallyl group onto the adenine at position 37 in tRNAs that read codons beginning with uridine, leading to the formation of N6-(dimethylallyl)adenosine (i(6)A). The sequence is that of tRNA dimethylallyltransferase from Rickettsia felis (strain ATCC VR-1525 / URRWXCal2) (Rickettsia azadi).